Here is a 264-residue protein sequence, read N- to C-terminus: Myozenin-2 (264 aa).

The residue at position 53 (R53) is an Omega-N-methylarginine. The disordered stretch occupies residues 98–134 (ESGSQQAPFTPPNTPDPRSPPNPENIAPGYSGPLKEI). At S101 the chain carries Phosphoserine. Residues 106 to 120 (FTPPNTPDPRSPPNP) show a composition bias toward pro residues. Phosphothreonine is present on residues T107 and T111. S116 is subject to Phosphoserine.

This sequence belongs to the myozenin family. In terms of assembly, interacts via its C-terminus with spectrin repeats 3 and 4 of ACTN2. Interacts with ACTN1, LDB3, MYOT and PPP3CA.

Its subcellular location is the cytoplasm. The protein localises to the myofibril. It localises to the sarcomere. The protein resides in the z line. Myozenins may serve as intracellular binding proteins involved in linking Z line proteins such as alpha-actinin, gamma-filamin, TCAP/telethonin, LDB3/ZASP and localizing calcineurin signaling to the sarcomere. Plays an important role in the modulation of calcineurin signaling. May play a role in myofibrillogenesis. The chain is Myozenin-2 (MYOZ2) from Bos taurus (Bovine).